The chain runs to 78 residues: Large ribosomal subunit protein bL28 (78 aa).

A disordered region spans residues 1–20; it reads MSRVCQVTGKRPVTGNNRSH.

It belongs to the bacterial ribosomal protein bL28 family.

The protein is Large ribosomal subunit protein bL28 of Vibrio atlanticus (strain LGP32) (Vibrio splendidus (strain Mel32)).